A 695-amino-acid chain; its full sequence is Potassium voltage-gated channel subfamily KQT member 4 (695 aa).

The disordered stretch occupies residues 1-21 (MAEAPPRRLGLGPPPGDAPRA). Residues 1–96 (MAEAPPRRLG…VYNVLERPRG (96 aa)) are Cytoplasmic-facing. Arg93 lines the a 1,2-diacyl-sn-glycero-3-phospho-(1D-myo-inositol-4,5-bisphosphate) pocket. A helical transmembrane segment spans residues 97-118 (WAFVYHVFIFLLVFSCLVLSVL). Residues 119 to 129 (STIQEHQELAN) lie on the Extracellular side of the membrane. Residues 130–152 (ECLLILEFVMIVVFGLEYIIRVW) traverse the membrane as a helical segment. Over 153 to 168 (SAGCCCRYRGWQGRFR) the chain is Cytoplasmic. The chain crosses the membrane as a helical span at residues 169 to 191 (FARKPFCVIDFIVFVASVAVIAA). Lys172 lines the a 1,2-diacyl-sn-glycero-3-phospho-(1D-myo-inositol-4,5-bisphosphate) pocket. The Extracellular segment spans residues 192-202 (GTQGNIFATSA). Residues 203–223 (LRSMRFLQILRMVRMDRRGGT) form a helical; Voltage-sensor membrane-spanning segment. A 1,2-diacyl-sn-glycero-3-phospho-(1D-myo-inositol-4,5-bisphosphate) is bound by residues Arg219, Arg220, Lys225, and Ser235. Residues 224–235 (WKLLGSVVYAHS) lie on the Cytoplasmic side of the membrane. A helical membrane pass occupies residues 236–258 (KELITAWYIGFLVLIFASFLVYL). Residues 259 to 270 (AEKDANSDFSSY) are Extracellular-facing. Residues 271 to 292 (ADSLWWGTITLTTIGYGDKTPH) constitute an intramembrane region (pore-forming). Residue Thr293 is a topological domain, extracellular. A helical membrane pass occupies residues 294-322 (WLGRVLAAGFALLGISFFALPAGILGSGF). The Cytoplasmic portion of the chain corresponds to 323–695 (ALKVQEQHRQ…ISRSVSTNMD (373 aa)). A 1,2-diacyl-sn-glycero-3-phospho-(1D-myo-inositol-4,5-bisphosphate) is bound by residues His330 and Lys333. Positions 342–351 (AANLIQAAWR) are interaction with CALM. The segment at 441–483 (RMSSSQKRTGPSKQHLAPPPIPTSPSSEQVGEASSPSKVQKSW) is disordered. Composition is skewed to polar residues over residues 442–452 (MSSSQKRTGPS) and 464–483 (SPSSEQVGEASSPSKVQKSW). Positions 535-549 (RSVRILKFLVAKRKF) are interaction with CALM. Residues 546 to 650 (KRKFKETLRP…SRCLRSGTSA (105 aa)) form a C-terminal assembly domain (tetramerization) region. Residues 588 to 608 (GRGPGDRKTREKGDKGPSDTE) form a disordered region. The segment covering 591 to 605 (PGDRKTREKGDKGPS) has biased composition (basic and acidic residues).

It belongs to the potassium channel family. KQT (TC 1.A.1.15) subfamily. Kv7.4/KCNQ4 sub-subfamily. In terms of assembly, homotetramer. Interacts (via C-terminus) with calmodulin; forms a heterooctameric structure (with 4:4 KCNQ1:CALM stoichiometry); the interaction is calcium-independent, constitutive, participates in the proper assembly of a functional channel. The interaction with calcium-free CALM controls channel trafficking whereas interaction with calcium-bound CALM regulates channel gating. May form a functional heteromultimeric channel with KCNQ3. Interacts with HSP90AB1; promotes cell surface expression of KCNQ4. As to expression, expressed in both the inner (IHCs) and the outer hair cells (OHCs) of the cochlea. Reciprocal longitudinal gradients of expression is present in IHCs and OHCs. The strongest expression in IHCs is in the base of the cochlea and in the apex for OHCs. A basal to apical gradient of expression is also present in both type I and type II spiral ganglion cells.

It localises to the basal cell membrane. It catalyses the reaction K(+)(in) = K(+)(out). Its activity is regulated as follows. Two molecules of phosphatidylinositol-4,5-bisphosphate (PIP2-I and PIP2-II) are essential to activate KCNQ4 channel by inducing the coupling of the voltage-sensing domain (VSD) and the pore-forming domain (PD). Upon channel activation, PIP2-I and PIP2-II disrupt the VSD-calmodulin/CALM interaction, causing the release of CALM from the VSD which triggers the opening of the gate. Calcium suppresses KCNQ4 channel current through calcium-bound CALM C-terminus. Therefore CALM acts as calcium sensor that controls channel activity. Its function is as follows. Pore-forming subunit of the voltage-gated potassium (Kv) channel involved in the regulation of sensory cells excitability in the cochlea. KCNQ4/Kv7.4 channel is composed of 4 pore-forming subunits assembled as tetramers. Promotes the outflow of potassium ions in the repolarization phase of action potential which plays a role in regulating membrane potential of excitable cells. The channel conducts a slowly activating and deactivating current. Current often shows some inward rectification at positive potentials. Channel may be selectively permeable in vitro to other cations besides potassium, in decreasing order of affinity K(+) = Rb(+) &gt; Cs(+) &gt; Na(+). Important for normal physiological function of inner ear such as sensory perception of sound. This Rattus norvegicus (Rat) protein is Potassium voltage-gated channel subfamily KQT member 4.